Consider the following 145-residue polypeptide: Flagellar assembly factor FliW (145 aa).

Belongs to the FliW family. Interacts with translational regulator CsrA and flagellin(s).

It is found in the cytoplasm. In terms of biological role, acts as an anti-CsrA protein, binds CsrA and prevents it from repressing translation of its target genes, one of which is flagellin. Binds to flagellin and participates in the assembly of the flagellum. In Anoxybacillus flavithermus (strain DSM 21510 / WK1), this protein is Flagellar assembly factor FliW.